Here is a 399-residue protein sequence, read N- to C-terminus: MAREKFERNKPHVNIGTIGHVDHGKTTLTAAITNVLAKKGQAQVQNYADIDGAPEERERGITINTAHVEYETEKRHYAHVDCPGHADYVKNMITGAAQMDGAILVCAATDGPMAQTKEHILLAKQVGVPALVVALNKCDMVDDEEIIELVEMEIRELLSSYDFPGDDIPVIQVSGLKAIEGEAEWEAKIDELMDAVDASIPEPEREVDKPFLMAIEDVFSITGRGTVATGRIERGIVKVGEEVEVVGIRDPRKTTVTGVEMFRKLLDEGMAGDNVGLLLRGIQKEDIERGMVLVKPGSITPHTKFEGQVYVLKKEEGGRHTPFFAGYRPQFYIRTTDVTGQITAFTAEDGSNVEMVMPGDNIQMTGELICPVAMEMGMRFAIREGGRTIGAGVVSKIIE.

Positions 10–204 constitute a tr-type G domain; it reads KPHVNIGTIG…AVDASIPEPE (195 aa). Residues 19 to 26 form a G1 region; that stretch reads GHVDHGKT. 19–26 contacts GTP; sequence GHVDHGKT. Thr-26 lines the Mg(2+) pocket. The segment at 60–64 is G2; it reads GITIN. The segment at 81–84 is G3; the sequence is DCPG. GTP-binding positions include 81-85 and 136-139; these read DCPGH and NKCD. The G4 stretch occupies residues 136–139; the sequence is NKCD. Positions 174–176 are G5; the sequence is SGL.

Belongs to the TRAFAC class translation factor GTPase superfamily. Classic translation factor GTPase family. EF-Tu/EF-1A subfamily. In terms of assembly, monomer.

It localises to the cytoplasm. It catalyses the reaction GTP + H2O = GDP + phosphate + H(+). Its function is as follows. GTP hydrolase that promotes the GTP-dependent binding of aminoacyl-tRNA to the A-site of ribosomes during protein biosynthesis. This Synechococcus sp. (strain CC9902) protein is Elongation factor Tu.